Here is a 296-residue protein sequence, read N- to C-terminus: Small ribosomal subunit biogenesis GTPase RsgA (296 aa).

Positions 63–224 (RNQLVRPPVA…IADTPGFSSY (162 aa)) constitute a CP-type G domain. Residues 112 to 115 (SKTD) and 167 to 175 (GQTGAGKST) contribute to the GTP site. Zn(2+)-binding residues include Cys248, Cys253, His255, and Cys261.

This sequence belongs to the TRAFAC class YlqF/YawG GTPase family. RsgA subfamily. In terms of assembly, monomer. Associates with 30S ribosomal subunit, binds 16S rRNA. Zn(2+) is required as a cofactor.

Its subcellular location is the cytoplasm. One of several proteins that assist in the late maturation steps of the functional core of the 30S ribosomal subunit. Helps release RbfA from mature subunits. May play a role in the assembly of ribosomal proteins into the subunit. Circularly permuted GTPase that catalyzes slow GTP hydrolysis, GTPase activity is stimulated by the 30S ribosomal subunit. This chain is Small ribosomal subunit biogenesis GTPase RsgA, found in Limosilactobacillus reuteri (strain DSM 20016) (Lactobacillus reuteri).